A 181-amino-acid chain; its full sequence is Ferritin heavy chain (181 aa).

M1 carries the post-translational modification N-acetylmethionine. Position 2 is an N-acetylthreonine; in Ferritin heavy chain, N-terminally processed (T2). Residues 11–160 (QNYHQDSEAA…DHITNLRKMG (150 aa)) enclose the Ferritin-like diiron domain. Residues E28, E63, H66, E108, and Q142 each coordinate Fe cation. S179 carries the phosphoserine modification.

This sequence belongs to the ferritin family. Oligomer of 24 subunits. There are two types of subunits: L (light) chain and H (heavy) chain. The major chain can be light or heavy, depending on the species and tissue type. The functional molecule forms a roughly spherical shell with a diameter of 12 nm and contains a central cavity into which the insoluble mineral iron core is deposited. Interacts with NCOA4; NCOA4 promotes targeting of the iron-binding ferritin complex to autolysosomes following starvation or iron depletion.

Its subcellular location is the cytoplasm. The protein localises to the lysosome. It localises to the cytoplasmic vesicle. The protein resides in the autophagosome. The catalysed reaction is 4 Fe(2+) + O2 + 4 H(+) = 4 Fe(3+) + 2 H2O. Functionally, stores iron in a soluble, non-toxic, readily available form. Important for iron homeostasis. Has ferroxidase activity. Iron is taken up in the ferrous form and deposited as ferric hydroxides after oxidation. Also plays a role in delivery of iron to cells. Mediates iron uptake in capsule cells of the developing kidney. Delivery to lysosomes is mediated by the cargo receptor NCOA4 for autophagic degradation and release of iron. This Bos taurus (Bovine) protein is Ferritin heavy chain (FTH1).